A 525-amino-acid polypeptide reads, in one-letter code: Mitochondrial-processing peptidase subunit alpha (525 aa).

Residues 1–33 constitute a mitochondrion transit peptide; the sequence is MAAVVLAATRLLRGSGSWGCSRLRFGPPAYRRF. K64 carries the post-translational modification N6-succinyllysine. K299 carries the post-translational modification N6-acetyllysine.

The protein belongs to the peptidase M16 family. As to quaternary structure, heterodimer of PMPCA (alpha) and PMPCB (beta) subunits, forming the mitochondrial processing protease (MPP) in which PMPCA is involved in substrate recognition and binding and PMPCB is the catalytic subunit.

The protein localises to the mitochondrion matrix. It localises to the mitochondrion inner membrane. Substrate recognition and binding subunit of the essential mitochondrial processing protease (MPP), which cleaves the mitochondrial sequence off newly imported precursors proteins. In Pongo abelii (Sumatran orangutan), this protein is Mitochondrial-processing peptidase subunit alpha (PMPCA).